The primary structure comprises 333 residues: 4-hydroxyproline 2-epimerase (333 aa).

C90 (proton acceptor) is an active-site residue. Residues 91-92 (GH), H223, and D249 each bind substrate. The active-site Proton donor is the C253. A substrate-binding site is contributed by 254 to 255 (GT).

It belongs to the proline racemase family.

It carries out the reaction trans-4-hydroxy-L-proline = cis-4-hydroxy-D-proline. Its function is as follows. Catalyzes the epimerization of trans-4-hydroxy-L-proline (t4LHyp) to cis-4-hydroxy-D-proline (c4DHyp). Is likely involved in a degradation pathway that converts t4LHyp to alpha-ketoglutarate. Displays no proline racemase activity. The chain is 4-hydroxyproline 2-epimerase from Shewanella loihica (strain ATCC BAA-1088 / PV-4).